Consider the following 329-residue polypeptide: 2,3,4,5-tetrahydropyridine-2,6-dicarboxylate N-succinyltransferase (329 aa).

Residues Asp-177 and Glu-194 each contribute to the Mg(2+) site. Glu-210 functions as the Acyl-anhydride intermediate in the catalytic mechanism. Succinyl-CoA-binding positions include Arg-212, Gly-227, Ser-230, Ala-253, 268-269 (EA), Gly-276, Lys-288, and 301-304 (RRNS).

Belongs to the type 2 tetrahydrodipicolinate N-succinyltransferase family. Homotrimer.

It localises to the cytoplasm. The enzyme catalyses (S)-2,3,4,5-tetrahydrodipicolinate + succinyl-CoA + H2O = (S)-2-succinylamino-6-oxoheptanedioate + CoA. It participates in amino-acid biosynthesis; L-lysine biosynthesis via DAP pathway; LL-2,6-diaminopimelate from (S)-tetrahydrodipicolinate (succinylase route): step 1/3. In terms of biological role, catalyzes the conversion of the cyclic tetrahydrodipicolinate (THDP) into the acyclic N-succinyl-L-2-amino-6-oxopimelate using succinyl-CoA. In Streptomyces coelicolor (strain ATCC BAA-471 / A3(2) / M145), this protein is 2,3,4,5-tetrahydropyridine-2,6-dicarboxylate N-succinyltransferase.